We begin with the raw amino-acid sequence, 551 residues long: Bestrophin-1 (551 aa).

Residues Met1–Leu31 are Cytoplasmic-facing. Ala10 lines the Ca(2+) pocket. The helical transmembrane segment at Leu32–Arg51 threads the bilayer. Residues Met52–Leu60 lie on the Extracellular side of the membrane. A helical membrane pass occupies residues Leu61–Leu82. Over Gly83–Thr237 the chain is Cytoplasmic. The helical transmembrane segment at Gln238–Arg255 threads the bilayer. Residues Gln256–Pro274 are Extracellular-facing. The helical transmembrane segment at Val275–Leu288 threads the bilayer. Residues Lys289–Glu551 lie on the Cytoplasmic side of the membrane. Ca(2+) contacts are provided by Gln293, Asn296, Asp301, and Asp304. The segment at Pro346–Glu379 is auto-inhibitory segment. Positions Ser459 to Tyr489 are disordered. Residues Ala465 to Ala475 are compositionally biased toward polar residues. Low complexity predominate over residues Pro476–Asp488.

This sequence belongs to the anion channel-forming bestrophin (TC 1.A.46) family. Calcium-sensitive chloride channel subfamily. As to quaternary structure, interacts with YWHAG; this interaction promotes the ligand-gated L-glutamate channel activity leading to the positive regulation of NMDA glutamate receptor activity through the L-glutamate secretion.

Its subcellular location is the cell membrane. The protein resides in the basolateral cell membrane. It catalyses the reaction 4-aminobutanoate(in) = 4-aminobutanoate(out). The catalysed reaction is L-glutamate(out) = L-glutamate(in). The enzyme catalyses chloride(in) = chloride(out). It carries out the reaction hydrogencarbonate(in) = hydrogencarbonate(out). It catalyses the reaction D-serine(in) = D-serine(out). With respect to regulation, inactivated by sulfhydryl-reactive agents. Its function is as follows. Ligand-gated anion channel that allows the movement of anions across cell membranes when activated by calcium (Ca2+). Allows the movement of chloride and hydrogencarbonate. Found in a partially open conformation leading to significantly smaller chloride movement. Upon F2R/PAR-1 activation, the sequestered calcium is released into the cytosol of astrocytes, leading to the (Ca2+)-dependent release of L-glutamate into the synaptic cleft that targets the neuronal postsynaptic GRIN2A/NMDAR receptor resulting in the synaptic plasticity regulation. Upon activation of the norepinephrine-alpha-1 adrenergic receptor signaling pathway, transports as well D-serine than L-glutamate in a (Ca2+)-dependent manner, leading to activation of adjacent NMDAR receptors and therefore regulates the heterosynaptic long-term depression and metaplasticity during initial memory acquisition. Releases the 4-aminobutanoate neurotransmitter in a (Ca2+)-dependent manner, and participates in its tonic release from cerebellar glial cells. This chain is Bestrophin-1, found in Mus musculus (Mouse).